The following is a 116-amino-acid chain: MHTSELLKHIYDINLSYLLLAQRLIVQDKASAMFRLGINEEMATTLAALTLPQMVKLAETNQLVCHFRFDSHQTITLLTQDSRVDDLQQIHTGIMLSTRLLNDVNQPEEALRKKRA.

It belongs to the FlhD family. In terms of assembly, homodimer; disulfide-linked. Forms a heterohexamer composed of two FlhC and four FlhD subunits. Each FlhC binds a FlhD dimer, forming a heterotrimer, and a hexamer assembles by dimerization of two heterotrimers.

Its subcellular location is the cytoplasm. Functions in complex with FlhC as a master transcriptional regulator that regulates transcription of several flagellar and non-flagellar operons by binding to their promoter region. Activates expression of class 2 flagellar genes, including fliA, which is a flagellum-specific sigma factor that turns on the class 3 genes. Also regulates genes whose products function in a variety of physiological pathways. The protein is Flagellar transcriptional regulator FlhD of Escherichia coli O157:H7.